A 2845-amino-acid chain; its full sequence is Adenomatous polyposis coli protein (2845 aa).

Ala2 is modified (N-acetylalanine). A coiled-coil region spans residues 2–61; the sequence is AAASYDQLLKQVEALKMENSNLRQELEDNSNHLTKLETEASNMKEVLKQLQGSIEDETMT. A phosphoserine mark is found at Ser105 and Ser109. Residues 125 to 245 are a coiled coil; that stretch reads SRESTGYLEE…QAAEAERSSQ (121 aa). Residues 238–304 form a disordered region; it reads AEAERSSQSR…THSAPRRLTS (67 aa). Positions 239–263 are enriched in basic and acidic residues; it reads EAERSSQSRHDAASHEAGRQHEGHG. Polar residues predominate over residues 266 to 279; it reads ESNTAASSSGQSPA. ARM repeat units follow at residues 451-493, 503-545, 546-589, 590-636, 637-681, 682-723, and 724-765; these read LMKL…HYSV, LTNL…IASV, LRNL…VLSA, LWNL…GGGI, LRNV…ACGT, LWNL…SAAA, and LRNL…LDAQ. Phosphoserine is present on residues Ser742, Ser746, and Ser778. The tract at residues 828 to 873 is disordered; sequence VLPSSSSSRGSLDSSRSEKDRSLERERGIGLSAYHPTTENAGTSSK. A compositionally biased stretch (low complexity) spans 831 to 841; the sequence is SSSSSRGSLDS. Residues 842–855 are compositionally biased toward basic and acidic residues; the sequence is SRSEKDRSLERERG. Polar residues predominate over residues 862-873; it reads HPTTENAGTSSK. Ser906 carries the phosphoserine modification. 2 disordered regions span residues 921–942 and 956–986; these read RRSS…ENSN and RSSN…SYSE. Polar residues predominate over residues 927 to 942; that stretch reads HTHSNTYNFTKSENSN. Over residues 959–969 the composition is skewed to low complexity; the sequence is NDSLNSVTSSD. 3 positions are modified to phosphoserine: Ser985, Ser1036, and Ser1040. Residues 1018–1168 form an interaction with catenins region; that stretch reads ELDTPINYSL…TNYSIKYNEE (151 aa). 4 disordered regions span residues 1058–1079, 1092–1168, 1189–1247, and 1307–1375; these read IKQN…YSEN, GQQE…YNEE, SQKP…GTTC, and ENDV…PEHY. Composition is skewed to polar residues over residues 1066-1078 and 1103-1128; these read ARSQ…VYSE and RGTS…QSLC. Positions 1189 to 1204 are enriched in low complexity; the sequence is SQKPSFSFSKNSSAQS. Polar residues predominate over residues 1211–1245; that stretch reads SPSSENTAVPPSNAKRQNQLRPSSAQRNGQTQKGT. The span at 1354 to 1365 shows a compositional bias: low complexity; the sequence is SSGAKSPSKSGA. Residues Ser1359, Ser1370, Ser1384, Ser1391, and Ser1394 each carry the phosphoserine modification. Disordered stretches follow at residues 1400-1474, 1525-1568, 1587-1606, 1746-2010, and 2042-2069; these read IASS…VNAA, PPVQ…SDDD, RKAK…VARK, DQVQ…APKS, and ISSA…KVGG. Thr1437 is subject to Phosphothreonine. Over residues 1447-1465 the composition is skewed to basic and acidic residues; it reads AKREVPKSKVPAAEKRESG. Over residues 1532–1546 the composition is skewed to acidic residues; sequence NGNETESEQPEESNE. The span at 1547–1562 shows a compositional bias: basic and acidic residues; sequence NQDKEVEKPDSEKDLL. Ser1565 is subject to Phosphoserine. Polar residues predominate over residues 1747–1762; sequence QVQQASSTSSGANKNQ. Ser1772 carries the phosphoserine modification. Basic and acidic residues predominate over residues 1783 to 1792; that stretch reads YRTRVRKNTD. Phosphoserine is present on residues Ser1859, Ser1861, and Ser1862. A highly charged region spans residues 1864 to 1891; it reads DFDDDDVDLSREKAELRKGKESKDSEAK. The span at 1871–1894 shows a compositional bias: basic and acidic residues; that stretch reads DLSREKAELRKGKESKDSEAKVTC. Residues 1900–1911 show a composition bias toward low complexity; sequence SSQQAASKSQAS. Positions 1927-1936 are enriched in polar residues; the sequence is KQPTFPQSSK. Residues 1937 to 1949 show a composition bias toward basic and acidic residues; that stretch reads DGPDRGAATDEKL. A phosphoserine mark is found at Ser1969 and Ser1971. Positions 1979–1990 are enriched in basic and acidic residues; it reads NNKESEPIKEAE. The interaction with AXIN1 stretch occupies residues 2034–2058; that stretch reads EDDLLQECISSAMPKKKRPSRLKSE. 6 positions are modified to phosphoserine: Ser2087, Ser2092, Ser2125, Ser2129, Ser2130, and Ser2132. 3 disordered regions span residues 2146 to 2190, 2202 to 2652, and 2664 to 2845; these read SPFH…GIKG, KIRS…PPVS, and CPIN…VTSV. A Phosphothreonine modification is found at Thr2151. The basic region stretch occupies residues 2167–2674; that stretch reads ILKPGEKSTL…PINNPRSGRS (508 aa). Positions 2169–2187 are enriched in basic and acidic residues; that stretch reads KPGEKSTLEAKKIESENKG. 2 stretches are compositionally biased toward polar residues: residues 2203–2223 and 2257–2272; these read IRSN…NMPS and ASKS…TSPR. Residues Ser2260, Ser2270, and Ser2283 each carry the phosphoserine modification. Over residues 2290 to 2311 the composition is skewed to low complexity; sequence SQISGSNKGSSRSGSRDSTPSR. Residues 2312–2331 show a composition bias toward polar residues; that stretch reads PTQQPLSRPMQSPGRNSISP. Low complexity predominate over residues 2348 to 2369; the sequence is TSSPSTASTKSSGSGKMSYTSP. Residues 2370 to 2411 are compositionally biased toward polar residues; the sequence is GRQLSQQNLTKQASLSKNASSIPRSESASKGLNQMSNGNGSN. Composition is skewed to low complexity over residues 2417–2429 and 2459–2477; these read SRMS…GSES and SASF…PTRS. 2 positions are modified to phosphoserine: Ser2473 and Ser2535. An interaction with DLG1 region spans residues 2475-2845; sequence TRSQAQTPVL…HSGSYLVTSV (371 aa). Over residues 2518–2535 the composition is skewed to basic and acidic residues; it reads NDGRPTKRHDIARSHSES. Residues 2555–2568 are compositionally biased toward polar residues; sequence SSSLPRVSTWRRTG. Position 2569 is a phosphoserine (Ser2569). Residues 2569–2579 are compositionally biased toward low complexity; sequence SSSSILSASSE. The span at 2580–2592 shows a compositional bias: basic and acidic residues; the sequence is SSEKAKSEDERHV. Over residues 2626 to 2638 the composition is skewed to low complexity; that stretch reads ASQSASSGAASGA. Positions 2668–2679 are enriched in polar residues; sequence NPRSGRSPTGNT. Ser2671 and Ser2674 each carry phosphoserine. The tract at residues 2674-2845 is interaction with MAPRE1; that stretch reads SPTGNTPPVI…HSGSYLVTSV (172 aa). Thr2679 carries the post-translational modification Phosphothreonine. The span at 2684-2694 shows a compositional bias: low complexity; sequence DSVSEKGSSSI. Residues 2695–2705 are compositionally biased toward basic and acidic residues; sequence KDSKDSKDTHG. Positions 2706–2716 are enriched in polar residues; that stretch reads KQSVGSGSPVQ. Residues Ser2713 and Ser2726 each carry the phosphoserine modification. A compositionally biased stretch (low complexity) spans 2765–2776; that stretch reads SSSSSSKHSSPS. Residues 2786 to 2814 are compositionally biased toward polar residues; that stretch reads FNYNPSPRKSSADSTSARPSQIPTPVSTN. At Ser2791 the chain carries Phosphoserine. The Microtubule tip localization signal signature appears at 2805–2808; that stretch reads SQIP. A PDZ-binding motif is present at residues 2843–2845; it reads TSV.

This sequence belongs to the adenomatous polyposis coli (APC) family. In terms of assembly, forms homooligomers. Found in a complex consisting of ARHGEF4, APC and CTNNB1. Found in a complex composed of MACF1, APC, AXIN1, CTNNB1 and GSK3B. The complex composed, at least, of APC, CTNNB1 and GSK3B interacts with JPT1; the interaction requires the inactive form of GSK3B (phosphorylated at 'Ser-9'). Interacts with APC2. Interacts with DLG1 (via PDZ domains) and DLG3 (via PDZ domains). Interacts with alpha- and beta-catenins. Interacts with AXIN1 (via RGS domain). Interacts with ARHGEF4 (via N-terminus). Interacts (via C-terminal residues 2674-2843) with MAPRE1 (via C-terminal residues 206-211); the interaction inhibits association with and bundling of F-actin. Interacts with MAPRE2 and MAPRE3 (via C-terminus). Interacts with DIAPH1; DIAPH1 acts as a scaffold protein for MAPRE1 and APC to stabilize microtubules and promote cell migration. Interacts with DIAPH2. Interacts with SCRIB; may mediate targeting to adherens junctions of epithelial cells. Interacts with SPATA13 (via N-terminus and SH3 domain). Interacts with ASAP1 (via SH3 domain). Interacts (at the cell membrane) with AMER1 and AMER2 (via ARM repeats). Interacts with KHDRBS1. Interacts with actin; binds both to F-actin and actin filament bundles. Post-translationally, phosphorylated; phosphorylation enhances the F-actin bundling activity. Phosphorylated by GSK3B. In terms of processing, ubiquitinated, leading to its degradation by the proteasome. Ubiquitination is facilitated by Axin. Deubiquitinated by ZRANB1/TRABID. Expressed in liver, spleen, kidney, heart, lung, brain, stomach, intestine, testis and ovary.

The protein resides in the cell junction. The protein localises to the adherens junction. Its subcellular location is the cytoplasm. It localises to the cytoskeleton. It is found in the cell projection. The protein resides in the lamellipodium. The protein localises to the ruffle membrane. Its subcellular location is the cell membrane. Its function is as follows. Tumor suppressor. Promotes rapid degradation of CTNNB1 and participates in Wnt signaling as a negative regulator. APC activity is correlated with its phosphorylation state. Activates the GEF activity of SPATA13 and ARHGEF4. Plays a role in hepatocyte growth factor (HGF)-induced cell migration. Required for MMP9 up-regulation via the JNK signaling pathway in colorectal tumor cells. Associates with both microtubules and actin filaments, components of the cytoskeleton. Plays a role in mediating the organization of F-actin into ordered bundles. Functions downstream of Rho GTPases and DIAPH1 to selectively stabilize microtubules. Acts as a mediator of ERBB2-dependent stabilization of microtubules at the cell cortex. It is required for the localization of MACF1 to the cell membrane and this localization of MACF1 is critical for its function in microtubule stabilization. This is Adenomatous polyposis coli protein (Apc) from Mus musculus (Mouse).